We begin with the raw amino-acid sequence, 446 residues long: Deoxyguanosinetriphosphate triphosphohydrolase-like protein (446 aa).

The tract at residues 1–28 is disordered; it reads MSSSVWQERRHGEDKQRRNDHRSPFQRD. Over residues 7–28 the composition is skewed to basic and acidic residues; that stretch reads QERRHGEDKQRRNDHRSPFQRD. The HD domain maps to 59–252; the sequence is RLTHSLEVSQ…MELADDIAYA (194 aa).

It belongs to the dGTPase family. Type 2 subfamily.

The sequence is that of Deoxyguanosinetriphosphate triphosphohydrolase-like protein from Shewanella sp. (strain ANA-3).